Consider the following 133-residue polypeptide: Small ribosomal subunit protein uS8 (133 aa).

The protein belongs to the universal ribosomal protein uS8 family. As to quaternary structure, part of the 30S ribosomal subunit. Contacts proteins S5 and S12.

Functionally, one of the primary rRNA binding proteins, it binds directly to 16S rRNA central domain where it helps coordinate assembly of the platform of the 30S subunit. The sequence is that of Small ribosomal subunit protein uS8 from Chlorobaculum parvum (strain DSM 263 / NCIMB 8327) (Chlorobium vibrioforme subsp. thiosulfatophilum).